A 213-amino-acid polypeptide reads, in one-letter code: Putative glutathione-dependent formaldehyde-activating enzyme (213 aa).

A CENP-V/GFA domain is found at 19–165 (FPGGTLKCLC…FRELGLETYD (147 aa)). Zn(2+)-binding residues include Cys-26, Cys-28, Cys-47, Cys-49, Cys-52, Cys-94, and Cys-97.

It belongs to the Gfa family. Zn(2+) serves as cofactor.

The enzyme catalyses S-(hydroxymethyl)glutathione = glutathione + formaldehyde. The protein operates within one-carbon metabolism; formaldehyde degradation; formate from formaldehyde (glutathione route): step 1/3. Catalyzes the condensation of formaldehyde and glutathione to S-hydroxymethylglutathione. The protein is Putative glutathione-dependent formaldehyde-activating enzyme of Podospora anserina (strain S / ATCC MYA-4624 / DSM 980 / FGSC 10383) (Pleurage anserina).